The primary structure comprises 208 residues: Large ribosomal subunit protein uL3 (208 aa).

Positions Gly-117–Ala-149 are disordered.

It belongs to the universal ribosomal protein uL3 family. As to quaternary structure, part of the 50S ribosomal subunit. Forms a cluster with proteins L14 and L19.

In terms of biological role, one of the primary rRNA binding proteins, it binds directly near the 3'-end of the 23S rRNA, where it nucleates assembly of the 50S subunit. This chain is Large ribosomal subunit protein uL3, found in Exiguobacterium sp. (strain ATCC BAA-1283 / AT1b).